We begin with the raw amino-acid sequence, 367 residues long: tRNA/tmRNA (uracil-C(5))-methyltransferase (367 aa).

The S-adenosyl-L-methionine site is built by Gln-182, Tyr-210, Asn-215, Glu-231, and Asp-293. Residue Cys-318 is the Nucleophile of the active site. Glu-352 serves as the catalytic Proton acceptor.

The protein belongs to the class I-like SAM-binding methyltransferase superfamily. RNA M5U methyltransferase family. TrmA subfamily.

The catalysed reaction is uridine(54) in tRNA + S-adenosyl-L-methionine = 5-methyluridine(54) in tRNA + S-adenosyl-L-homocysteine + H(+). The enzyme catalyses uridine(341) in tmRNA + S-adenosyl-L-methionine = 5-methyluridine(341) in tmRNA + S-adenosyl-L-homocysteine + H(+). Functionally, dual-specificity methyltransferase that catalyzes the formation of 5-methyluridine at position 54 (m5U54) in all tRNAs, and that of position 341 (m5U341) in tmRNA (transfer-mRNA). The sequence is that of tRNA/tmRNA (uracil-C(5))-methyltransferase from Neisseria meningitidis serogroup C (strain 053442).